Reading from the N-terminus, the 278-residue chain is Undecaprenyl-diphosphatase (278 aa).

Transmembrane regions (helical) follow at residues 2–22 (ALVE…TEWL), 44–64 (AFME…VVLL), 85–105 (IEMW…GLLW), 113–133 (FYNY…FIVI), 150–170 (ITYT…IFPG), 189–209 (TVAA…ASAL), 223–243 (LMIL…SIKF), and 253–273 (FKIF…YFSA).

The protein belongs to the UppP family.

It is found in the cell membrane. It catalyses the reaction di-trans,octa-cis-undecaprenyl diphosphate + H2O = di-trans,octa-cis-undecaprenyl phosphate + phosphate + H(+). Functionally, catalyzes the dephosphorylation of undecaprenyl diphosphate (UPP). Confers resistance to bacitracin. The polypeptide is Undecaprenyl-diphosphatase (Desulfitobacterium hafniense (strain DSM 10664 / DCB-2)).